The chain runs to 140 residues: Large ribosomal subunit protein bL21 (140 aa).

Positions 106 to 140 (SGVKPAVGARTKIEPAVKPAKAKKSEAEASAEDAN) are disordered.

The protein belongs to the bacterial ribosomal protein bL21 family. Part of the 50S ribosomal subunit. Contacts protein L20.

In terms of biological role, this protein binds to 23S rRNA in the presence of protein L20. The protein is Large ribosomal subunit protein bL21 of Paracoccus denitrificans (strain Pd 1222).